Reading from the N-terminus, the 427-residue chain is Glutamate-1-semialdehyde 2,1-aminomutase (427 aa).

The residue at position 265 (Lys-265) is an N6-(pyridoxal phosphate)lysine.

This sequence belongs to the class-III pyridoxal-phosphate-dependent aminotransferase family. HemL subfamily. Homodimer. The cofactor is pyridoxal 5'-phosphate.

It is found in the cytoplasm. The catalysed reaction is (S)-4-amino-5-oxopentanoate = 5-aminolevulinate. It functions in the pathway porphyrin-containing compound metabolism; protoporphyrin-IX biosynthesis; 5-aminolevulinate from L-glutamyl-tRNA(Glu): step 2/2. This is Glutamate-1-semialdehyde 2,1-aminomutase from Pseudomonas aeruginosa (strain LESB58).